A 150-amino-acid polypeptide reads, in one-letter code: Single-stranded DNA-binding protein rim1, mitochondrial (150 aa).

A mitochondrion-targeting transit peptide spans 1-22 (MLFLKSSRAFSKRLFSSSTVRY). The region spanning 25–125 (IQRLTLTGNL…HVSADVLFYP (101 aa)) is the SSB domain. The tract at residues 127-150 (NKNGDESGEETHPELDADPMINSF) is disordered. The span at 128–141 (KNGDESGEETHPEL) shows a compositional bias: basic and acidic residues.

It is found in the mitochondrion. In terms of biological role, this protein binds preferentially and cooperatively to ss-DNA. Involved in mitochondrial DNA replication. This is Single-stranded DNA-binding protein rim1, mitochondrial (rim1) from Schizosaccharomyces pombe (strain 972 / ATCC 24843) (Fission yeast).